The primary structure comprises 135 residues: Large ribosomal subunit protein uL16c (135 aa).

Residues 1 to 20 (MLSPKRTRFRKQHRGRMKGK) form a disordered region.

The protein belongs to the universal ribosomal protein uL16 family. In terms of assembly, part of the 50S ribosomal subunit.

It localises to the plastid. It is found in the chloroplast. The chain is Large ribosomal subunit protein uL16c from Landoltia punctata (Dotted duckmeat).